We begin with the raw amino-acid sequence, 217 residues long: Non-structural protein NS3 (217 aa).

This sequence belongs to the orbivirus NS3 family.

Its function is as follows. May play a role in the release of virions from infected cells. The sequence is that of Non-structural protein NS3 (Segment-10) from Camelus dromedarius (Dromedary).